The chain runs to 234 residues: Coiled-coil domain-containing protein 194 (234 aa).

The first 42 residues, 1 to 42, serve as a signal peptide directing secretion; it reads MAEPGPEPGRAWRVLALCGVAVFLAAAAAGGALVAWNLAASA. Disordered regions lie at residues 44–67 and 187–234; these read RGPR…PGVD and VLEA…RARG. Residues 66 to 163 adopt a coiled-coil conformation; sequence VDDLRRRLAE…TRRLDEALRR (98 aa). Residues 187 to 196 are compositionally biased toward low complexity; the sequence is VLEAEMSPQR. Residues 197 to 217 are compositionally biased toward basic residues; it reads RVPRPRPRSGSRPRPSPRSRS.

The sequence is that of Coiled-coil domain-containing protein 194 from Homo sapiens (Human).